Here is a 121-residue protein sequence, read N- to C-terminus: Small ribosomal subunit protein uS13 (121 aa).

The interval 96-121 (PVRGQNTKNNARTRKGKAVAIAGKKK) is disordered. Basic residues predominate over residues 106-121 (ARTRKGKAVAIAGKKK).

Belongs to the universal ribosomal protein uS13 family. Part of the 30S ribosomal subunit. Forms a loose heterodimer with protein S19. Forms two bridges to the 50S subunit in the 70S ribosome.

Functionally, located at the top of the head of the 30S subunit, it contacts several helices of the 16S rRNA. In the 70S ribosome it contacts the 23S rRNA (bridge B1a) and protein L5 of the 50S subunit (bridge B1b), connecting the 2 subunits; these bridges are implicated in subunit movement. Contacts the tRNAs in the A and P-sites. The polypeptide is Small ribosomal subunit protein uS13 (Streptococcus pneumoniae serotype 4 (strain ATCC BAA-334 / TIGR4)).